We begin with the raw amino-acid sequence, 388 residues long: Cell adhesion molecule 4 (388 aa).

The first 20 residues, 1–20 (MGRARRFQWPLLLLWAAAAG), serve as a signal peptide directing secretion. The Ig-like V-type domain occupies 21 to 119 (PGTAQEVQTE…DTHHQIATLT (99 aa)). The Extracellular segment spans residues 25–324 (QEVQTENVTV…VEAQTSVPYA (300 aa)). N-linked (GlcNAc...) asparagine glycosylation is found at asparagine 31 and asparagine 67. Cystine bridges form between cysteine 44/cysteine 104, cysteine 145/cysteine 199, and cysteine 245/cysteine 291. Ig-like C2-type domains lie at 124–219 (PENP…YVLD) and 224–307 (PTAR…YVLV). N-linked (GlcNAc...) asparagine glycosylation is present at asparagine 286. A helical transmembrane segment spans residues 325–345 (IVGGILALLVFLIICVLVGMV). At 346–388 (WCSVRQKGSYLTHEASGLDEQGEAREAFLNGSDGHKRKEEFFI) the chain is on the cytoplasmic side. Phosphoserine is present on serine 361.

It belongs to the nectin family. Monomer and homodimer. In terms of processing, N-glycosylated.

The protein resides in the membrane. Its function is as follows. Involved in the cell-cell adhesion. Has calcium- and magnesium-independent cell-cell adhesion activity. May have tumor-suppressor activity. The protein is Cell adhesion molecule 4 (Cadm4) of Rattus norvegicus (Rat).